The chain runs to 187 residues: HTH-type transcriptional regulator NfxB (187 aa).

Positions 26-45 form a DNA-binding region, H-T-H motif; the sequence is LKELAEAAGVSKATLHRFCG.

In terms of biological role, confers resistance to guinolones. May negatively regulate the expression of genes that are associated with cell permeability to drugs. This is HTH-type transcriptional regulator NfxB (nfxB) from Pseudomonas aeruginosa (strain ATCC 15692 / DSM 22644 / CIP 104116 / JCM 14847 / LMG 12228 / 1C / PRS 101 / PAO1).